Here is a 179-residue protein sequence, read N- to C-terminus: NADH dehydrogenase [ubiquinone] 1 beta subcomplex subunit 9 (179 aa).

N-acetylalanine is present on Ala-2. Phosphoserine is present on Ser-85. The interval 136 to 162 (EVKQLQEETPPGGPLTEALPPARKEGD) is disordered.

Belongs to the complex I LYR family. Mammalian complex I is composed of 45 different subunits.

The protein localises to the mitochondrion inner membrane. Functionally, accessory subunit of the mitochondrial membrane respiratory chain NADH dehydrogenase (Complex I), that is believed to be not involved in catalysis. Complex I functions in the transfer of electrons from NADH to the respiratory chain. The immediate electron acceptor for the enzyme is believed to be ubiquinone. This Homo sapiens (Human) protein is NADH dehydrogenase [ubiquinone] 1 beta subcomplex subunit 9 (NDUFB9).